The following is a 1342-amino-acid chain: MSLSPHVENASIPKGSTPIPKNRNVSSIGKGEFLGSSSSNNSSFRMNHYSNSGQPSVLDSIRRPNLTPTFSYSNGVYMPESHRTSSFNDSYLPYDKNPYAKTTGSMSNKSNMKIKTKKNAINTNTRKSSGLIYTTKVDKELSSIDKVNDPNINGLVCAGKTHLGLYKFSPSDRSIKCVHDFITPNSNTSTRGTTSLLPKLSKRTRQNKFSTIADVKTGFNNYKNCIAVCNNSTAISIYDLNKSSSIDNPLITSLCEHTRSINSFDFNMVESNLIISGGQDSCVKIWDLRSNKSKSSNRSDISINTASDSIRDVKWMPGYNFASKNDQGSSTYGNLKSGYKFASIHDSGYLLKFDLRQPAQYEKKLNAHTGPGLCLNWHPNQEYIATGGRDGKCCLWFVGDNANAAENTVLNYGNSPSLHAPNTSLNNSGSLAFPKLTINTGYPVTKLKFKPAYSSNIYNSLLGISSMGDEAEVRIYSLARKYIPKHVLLSETPSLGLVWWDENLIFNIDKGTRINGWDINKEPTVLENLSKNTTTWRDLDGNGLLSVDQEIGSYEVVEPELQPTSSTTCKKHPGTIKNPKNGNPENQGIIGGIKKGFSHTGLTSFTPERPPTLKAGPTFSTKSLTLASGASSFNSSSASLTSLTPQTENREEIAIEPPCIITLDIPQIFNNIRLTKIAHSRKKNVISESSSMKNSPVEKFKYLARQLKFSYIREHNVSDSADTAYKNDIENIDVVKNATETHGDNTTTTNNNDDGDDDDDDDDDDDKIIESHLLKKYNFPENNTWATLMNEKVNNKKSKRNSSSSREFDEKDVRSSISSISASRQSHDRSRKIDKNVEAELQEKIQTLVDLISIATHNASVYLSIDDLTNFKIWILIRDSLLWDLKWMTSSQISSDNASNMDANESSDFEAGENLKTGKEFPEEDGAGTSGAESLVEERPQAFRANSDEPSDAEKKPVSKLKEQLKNTEIIPYAQPNEDSDEVLIKLKELQNQRLESRTKMGETVSDDVIIEEDEHEHQEEEQPHDSPTKSAQFHASPIAKSIPILQKREHRKSFIDTFMLHSPNGYNGDTDIGNEDDNISLRFTYNSVSPRSKVSSLQSYATTTSQLETFKKLSSHTAPIIGSPRHAPSRPDSIGREQLSSSLTKKLAKCKKIIADPPWDTKKLIKQLYNQATETGNVVLTVNILFLFQTIYQITEIDIAKDAIAHFLLLLHRYELFGIAADVLKYCPFEDIMGSEGDQSSIRLFCERCGELITNESSKEKLRAEAQQTGNKKIMDKFGYWYCDSCKKKNTSCVLCERPLKKLTMVILPCGHEGHFQCIQEWFLDENEQECPGGCPGVAFI.

Positions 1–39 (MSLSPHVENASIPKGSTPIPKNRNVSSIGKGEFLGSSSS) are disordered. WD repeat units follow at residues 207-248 (NKFS…SIDN), 256-296 (EHTR…SKSS), 305-342 (TASDSIRDVKWMPGYNFASKNDQGSSTYGNLKSGYKFA), 367-406 (AHTGPGLCLNWHPNQEYIATGGRDGKCCLWFVGDNANAAE), 439-486 (NTGY…IPKH), and 489-527 (LSETPSLGLVWWDENLIFNIDKGTRINGWDINKEPTVLE). Disordered stretches follow at residues 559–593 (PELQPTSSTTCKKHPGTIKNPKNGNPENQGIIGGI), 600–619 (TGLTSFTPERPPTLKAGPTF), 630–651 (ASSFNSSSASLTSLTPQTENRE), 736–766 (KNATETHGDNTTTTNNNDDGDDDDDDDDDDD), and 788–831 (LMNE…DRSR). A compositionally biased stretch (low complexity) spans 630-644 (ASSFNSSSASLTSLT). A compositionally biased stretch (acidic residues) spans 753-766 (DDGDDDDDDDDDDD). Low complexity predominate over residues 815–824 (SSISSISASR). One copy of the WD 7 repeat lies at 844–884 (KIQTLVDLISIATHNASVYLSIDDLTNFKIWILIRDSLLWD). 2 disordered regions span residues 942 to 962 (AFRANSDEPSDAEKKPVSKLK) and 1014 to 1043 (DEHEHQEEEQPHDSPTKSAQFHASPIAKSI). Composition is skewed to basic and acidic residues over residues 952–962 (DAEKKPVSKLK) and 1016–1028 (HEHQEEEQPHDSP). Phosphoserine occurs at positions 1037, 1081, 1088, 1090, 1124, and 1134. WD repeat units follow at residues 1130 to 1170 (SRPD…KQLY) and 1217 to 1256 (LFGIAADVLKYCPFEDIMGSEGDQSSIRLFCERCGELITN). The segment at 1294–1336 (CVLCERPLKKLTMVILPCGHEGHFQCIQEWFLDENEQECPGGC) adopts an RING-type; degenerate zinc-finger fold.

This sequence belongs to the WD repeat RTC1 family.

It localises to the vacuole. Its function is as follows. May be involved in a process influencing telomere capping. This Saccharomyces cerevisiae (strain Lalvin EC1118 / Prise de mousse) (Baker's yeast) protein is Restriction of telomere capping protein 1 (RTC1).